The chain runs to 654 residues: Acetyl-coenzyme A synthetase (654 aa).

CoA contacts are provided by residues 193 to 196 (RRGK) and Thr-313. Residues 389 to 391 (GEP), 413 to 418 (DTWWQT), Asp-506, and Arg-521 each bind ATP. Residue Ser-529 coordinates CoA. Residue Arg-532 participates in ATP binding. 2 residues coordinate Mg(2+): His-545 and Val-548. Lys-619 is subject to N6-acetyllysine.

Belongs to the ATP-dependent AMP-binding enzyme family. Mg(2+) is required as a cofactor. Post-translationally, acetylated. Deacetylation by the SIR2-homolog deacetylase activates the enzyme.

The catalysed reaction is acetate + ATP + CoA = acetyl-CoA + AMP + diphosphate. Functionally, catalyzes the conversion of acetate into acetyl-CoA (AcCoA), an essential intermediate at the junction of anabolic and catabolic pathways. AcsA undergoes a two-step reaction. In the first half reaction, AcsA combines acetate with ATP to form acetyl-adenylate (AcAMP) intermediate. In the second half reaction, it can then transfer the acetyl group from AcAMP to the sulfhydryl group of CoA, forming the product AcCoA. The polypeptide is Acetyl-coenzyme A synthetase (Wolinella succinogenes (strain ATCC 29543 / DSM 1740 / CCUG 13145 / JCM 31913 / LMG 7466 / NCTC 11488 / FDC 602W) (Vibrio succinogenes)).